The sequence spans 487 residues: Betaine aldehyde dehydrogenase (487 aa).

2 residues coordinate K(+): Ser-26 and Asp-93. 150 to 152 is an NAD(+) binding site; it reads GAW. The active-site Charge relay system is Lys-162. Residues 176–179 and 229–232 each bind NAD(+); these read KPSE and SVPT. Leu-244 provides a ligand contact to K(+). Glu-250 acts as the Proton acceptor in catalysis. NAD(+) contacts are provided by Gly-252, Cys-284, and Glu-384. Cys-284 serves as the catalytic Nucleophile. Cysteine sulfenic acid (-SOH) is present on Cys-284. Residues Lys-454 and Gly-457 each contribute to the K(+) site. Residue Glu-461 is the Charge relay system of the active site.

The protein belongs to the aldehyde dehydrogenase family. In terms of assembly, dimer of dimers. Requires K(+) as cofactor.

It catalyses the reaction betaine aldehyde + NAD(+) + H2O = glycine betaine + NADH + 2 H(+). It functions in the pathway amine and polyamine biosynthesis; betaine biosynthesis via choline pathway; betaine from betaine aldehyde: step 1/1. Functionally, involved in the biosynthesis of the osmoprotectant glycine betaine. Catalyzes the irreversible oxidation of betaine aldehyde to the corresponding acid. The protein is Betaine aldehyde dehydrogenase of Rhizobium etli (strain CIAT 652).